The chain runs to 49 residues: Single-stranded DNA-binding protein (49 aa).

In terms of assembly, homodimer in the absence of DNA, monomer when binding DNA.

Its function is as follows. Binds preferentially to single-stranded DNA and therefore, destabilizes double-stranded DNA. It is involved in DNA replication, repair and recombination. Binds ss-DNA as the replication fork advances and stimulates the replisome processivity and accuracy. This chain is Single-stranded DNA-binding protein (32), found in Escherichia coli (Bacteriophage RB32).